We begin with the raw amino-acid sequence, 128 residues long: uncharacterized protein (128 aa).

Residues 5–128 (SIHHIAIICS…DQLPLELYEQ (124 aa)) form the VOC domain. Positions 8, 56, 77, and 124 each coordinate a divalent metal cation.

This is an uncharacterized protein from Bacillus subtilis (strain 168).